The sequence spans 499 residues: Phenylalanine--tRNA ligase alpha subunit (499 aa).

L-phenylalanine contacts are provided by residues T342, 381 to 383 (QID), and F422. E424 contacts Mg(2+). Position 447 (F447) interacts with L-phenylalanine.

It belongs to the class-II aminoacyl-tRNA synthetase family. Phe-tRNA synthetase alpha subunit type 2 subfamily. Tetramer of two alpha and two beta subunits. It depends on Mg(2+) as a cofactor.

The protein localises to the cytoplasm. It carries out the reaction tRNA(Phe) + L-phenylalanine + ATP = L-phenylalanyl-tRNA(Phe) + AMP + diphosphate + H(+). This chain is Phenylalanine--tRNA ligase alpha subunit, found in Pyrococcus furiosus (strain ATCC 43587 / DSM 3638 / JCM 8422 / Vc1).